We begin with the raw amino-acid sequence, 131 residues long: uncharacterized protein (131 aa).

Residues 1-116 form the CMP/dCMP-type deaminase domain; the sequence is MYMARMLSEM…EMLEASSIQC (116 aa).

This is an uncharacterized protein from Caenorhabditis elegans.